The primary structure comprises 340 residues: L-lysine 2,3-aminomutase (340 aa).

Positions 106–321 constitute a Radical SAM core domain; sequence RKYNNRILLL…SMISGFLVPK (216 aa). 3 residues coordinate [4Fe-4S] cluster: Cys-120, Cys-124, and Cys-127. At Lys-332 the chain carries N6-(pyridoxal phosphate)lysine.

Belongs to the radical SAM superfamily. KamA family. [4Fe-4S] cluster serves as cofactor. It depends on pyridoxal 5'-phosphate as a cofactor.

The catalysed reaction is L-lysine = D-beta-lysine. With EpmA is involved in the beta-lysylation step of the post-translational modification of translation elongation factor P (EF-P) on 'Lys-34'. EpmB appears to act before EpmA. Displays lysine 2,3-aminomutase activity, producing (R)-beta-lysine from (S)-alpha-lysine (L-lysine). In Buchnera aphidicola subsp. Baizongia pistaciae (strain Bp), this protein is L-lysine 2,3-aminomutase (epmB).